Consider the following 391-residue polypeptide: MVTQNKKILIITGSFGNGHLQVTQSVVNQLNEMNLSHLSVIEHDLFMEAHPILTSICKKWYINSFKYFRNMYKNFYYSRPDELDKCFYKYYGLNKLINLLLKEKPDLILLTFPTPVMSVLTEQFNINIPIATVMTDYRLQKNWITPNSHRYYVATDDTKRDFVNAGIPASDIKVTGIPISDKFESDIDKVAWLKKHNLNPDKPTILMSAGAFGVSKGFDYMIDNILQKSPQSQIVMVCGRSKGLKRTLEMQFKSYDNVLILGYTKHMNEWMASSQLMITKPGGITISEGLTRSLPMIFLNPAPGQELENALYFQDKSYGKIANTPEEAIDIVSDLTNHEYRLQAMTNKMTEEKVNHSTYRLCTDLLNILDSSSQQQEIYGKVPLYARFFVK.

The protein belongs to the glycosyltransferase 28 family. UgtP subfamily.

Its subcellular location is the cell membrane. The catalysed reaction is a 1,2-diacyl-3-O-(beta-D-glucopyranosyl)-sn-glycerol + UDP-alpha-D-glucose = a 1,2-diacyl-3-O-(beta-D-Glc-(1-&gt;6)-beta-D-Glc)-sn-glycerol + UDP + H(+). The enzyme catalyses a 1,2-diacyl-sn-glycerol + UDP-alpha-D-glucose = a 1,2-diacyl-3-O-(beta-D-glucopyranosyl)-sn-glycerol + UDP + H(+). It functions in the pathway glycolipid metabolism; diglucosyl-diacylglycerol biosynthesis. Its function is as follows. Processive glucosyltransferase involved in the biosynthesis of both the bilayer- and non-bilayer-forming membrane glucolipids. Is able to successively transfer two glucosyl residues to diacylglycerol (DAG), thereby catalyzing the formation of beta-monoglucosyl-DAG (3-O-(beta-D-glucopyranosyl)-1,2-diacyl-sn-glycerol) and beta-diglucosyl-DAG (3-O-(beta-D-glucopyranosyl-beta-(1-&gt;6)-D-glucopyranosyl)-1,2-diacyl-sn-glycerol). Beta-diglucosyl-DAG is the predominant glycolipid found in Bacillales and is also used as a membrane anchor for lipoteichoic acid (LTA). This chain is Processive diacylglycerol beta-glucosyltransferase, found in Staphylococcus haemolyticus (strain JCSC1435).